The chain runs to 356 residues: Chavicol O-methyltransferase (356 aa).

Gly-202, Asp-225, Asp-245, Met-246, and Lys-259 together coordinate S-adenosyl-L-methionine. His-263 functions as the Proton acceptor in the catalytic mechanism.

It belongs to the class I-like SAM-binding methyltransferase superfamily. Cation-independent O-methyltransferase family. COMT subfamily. In terms of assembly, homodimer. In terms of tissue distribution, specifically expressed in the peltate glandular trichomes on the surface of the young basil leaves.

It catalyses the reaction (E)-isoeugenol + S-adenosyl-L-methionine = (E)-isomethyleugenol + S-adenosyl-L-homocysteine + H(+). It participates in aromatic compound metabolism; phenylpropanoid biosynthesis. Functionally, phenylpropene O-methyltransferase that catalyzes the methylation of the para-4-hydroxyl of chavicol to methylchavicol. Can also convert eugenol to methyleugenol but with less affinity. This is Chavicol O-methyltransferase (CVOMT1) from Ocimum basilicum (Sweet basil).